Here is a 154-residue protein sequence, read N- to C-terminus: Endoribonuclease YbeY (154 aa).

Residues His-117, His-121, and His-127 each coordinate Zn(2+).

It belongs to the endoribonuclease YbeY family. The cofactor is Zn(2+).

It localises to the cytoplasm. In terms of biological role, single strand-specific metallo-endoribonuclease involved in late-stage 70S ribosome quality control and in maturation of the 3' terminus of the 16S rRNA. The protein is Endoribonuclease YbeY of Aromatoleum aromaticum (strain DSM 19018 / LMG 30748 / EbN1) (Azoarcus sp. (strain EbN1)).